The chain runs to 260 residues: uncharacterized protein (260 aa).

This is an uncharacterized protein from Methanocaldococcus jannaschii (strain ATCC 43067 / DSM 2661 / JAL-1 / JCM 10045 / NBRC 100440) (Methanococcus jannaschii).